Reading from the N-terminus, the 268-residue chain is Hydroxyethylthiazole kinase 2 (268 aa).

Residue methionine 42 participates in substrate binding. 2 residues coordinate ATP: lysine 117 and threonine 167. Glycine 194 is a binding site for substrate.

Belongs to the Thz kinase family. It depends on Mg(2+) as a cofactor.

It carries out the reaction 5-(2-hydroxyethyl)-4-methylthiazole + ATP = 4-methyl-5-(2-phosphooxyethyl)-thiazole + ADP + H(+). It participates in cofactor biosynthesis; thiamine diphosphate biosynthesis; 4-methyl-5-(2-phosphoethyl)-thiazole from 5-(2-hydroxyethyl)-4-methylthiazole: step 1/1. In terms of biological role, catalyzes the phosphorylation of the hydroxyl group of 4-methyl-5-beta-hydroxyethylthiazole (THZ). This chain is Hydroxyethylthiazole kinase 2, found in Streptococcus pneumoniae (strain CGSP14).